A 438-amino-acid polypeptide reads, in one-letter code: DNA polymerase IV 1 (438 aa).

The region spanning 46-226 is the UmuC domain; that stretch reads LAHIDCDAFY…KPVTMIWGVG (181 aa). Mg(2+) is bound by residues Asp50 and Asp143. The active site involves Glu144.

This sequence belongs to the DNA polymerase type-Y family. As to quaternary structure, monomer. Mg(2+) serves as cofactor.

It is found in the cytoplasm. The catalysed reaction is DNA(n) + a 2'-deoxyribonucleoside 5'-triphosphate = DNA(n+1) + diphosphate. In terms of biological role, poorly processive, error-prone DNA polymerase involved in untargeted mutagenesis. Copies undamaged DNA at stalled replication forks, which arise in vivo from mismatched or misaligned primer ends. These misaligned primers can be extended by PolIV. Exhibits no 3'-5' exonuclease (proofreading) activity. May be involved in translesional synthesis, in conjunction with the beta clamp from PolIII. This Mesorhizobium japonicum (strain LMG 29417 / CECT 9101 / MAFF 303099) (Mesorhizobium loti (strain MAFF 303099)) protein is DNA polymerase IV 1 (dinB1).